Here is a 166-residue protein sequence, read N- to C-terminus: Cold-inducible RNA-binding protein (166 aa).

Positions 6–84 constitute an RRM domain; that stretch reads GKLFVGGLNF…RQIRVDQAGK (79 aa). Residues 68 to 166 are disordered; that stretch reads NGKSVDGRQI…DSYDSYTTQE (99 aa). Residues 93 to 120 show a composition bias toward gly residues; sequence YRGGSSGGRGFFRGGRGRGGGGDRGYGG. Residues 121–166 show a composition bias toward low complexity; sequence SSRFENRSGGYQSSGSRDYYGRSHGSYGDRSGGSYRDSYDSYTTQE.

Interacts with prmt1. Interacts with elavl1/elrA (via RRM3). Associates with ribosomes. Post-translationally, methylated on arginine residues within RGG motifs. Methylation by prmt1 promotes cytoplasmic accumulation.

The protein localises to the nucleus. It localises to the nucleoplasm. Its subcellular location is the cytoplasm. Its function is as follows. Cold-inducible mRNA binding protein. Acts cooperatively with elavl1/elrA to stabilize AU-rich element (ARE)-containing mRNAs by binding to themm and inhibiting their deadenylation. Essential for embryonic gastrulation and neural development, acting to maintain the expression of a set of adhesion molecules, and cell movement during embryogenesis. Required for pronephros development. In Xenopus tropicalis (Western clawed frog), this protein is Cold-inducible RNA-binding protein.